Here is a 1342-residue protein sequence, read N- to C-terminus: DNA-directed RNA polymerase subunit beta (1342 aa).

This sequence belongs to the RNA polymerase beta chain family. As to quaternary structure, the RNAP catalytic core consists of 2 alpha, 1 beta, 1 beta' and 1 omega subunit. When a sigma factor is associated with the core the holoenzyme is formed, which can initiate transcription.

It carries out the reaction RNA(n) + a ribonucleoside 5'-triphosphate = RNA(n+1) + diphosphate. Its function is as follows. DNA-dependent RNA polymerase catalyzes the transcription of DNA into RNA using the four ribonucleoside triphosphates as substrates. In Serratia proteamaculans (strain 568), this protein is DNA-directed RNA polymerase subunit beta.